A 176-amino-acid polypeptide reads, in one-letter code: ATP-dependent protease subunit HslV (176 aa).

Thr2 is a catalytic residue. Gly157, Cys160, and Thr163 together coordinate Na(+).

This sequence belongs to the peptidase T1B family. HslV subfamily. As to quaternary structure, a double ring-shaped homohexamer of HslV is capped on each side by a ring-shaped HslU homohexamer. The assembly of the HslU/HslV complex is dependent on binding of ATP.

It is found in the cytoplasm. The catalysed reaction is ATP-dependent cleavage of peptide bonds with broad specificity.. Its activity is regulated as follows. Allosterically activated by HslU binding. Functionally, protease subunit of a proteasome-like degradation complex believed to be a general protein degrading machinery. This Pectobacterium atrosepticum (strain SCRI 1043 / ATCC BAA-672) (Erwinia carotovora subsp. atroseptica) protein is ATP-dependent protease subunit HslV.